A 548-amino-acid polypeptide reads, in one-letter code: Chaperonin GroEL (548 aa).

ATP is bound by residues 30 to 33 (TLGP), Lys-51, 87 to 91 (DGTTT), Gly-415, 479 to 481 (NAA), and Asp-495.

It belongs to the chaperonin (HSP60) family. Forms a cylinder of 14 subunits composed of two heptameric rings stacked back-to-back. Interacts with the co-chaperonin GroES.

The protein resides in the cytoplasm. The catalysed reaction is ATP + H2O + a folded polypeptide = ADP + phosphate + an unfolded polypeptide.. Functionally, together with its co-chaperonin GroES, plays an essential role in assisting protein folding. The GroEL-GroES system forms a nano-cage that allows encapsulation of the non-native substrate proteins and provides a physical environment optimized to promote and accelerate protein folding. The protein is Chaperonin GroEL of Aliivibrio fischeri (strain MJ11) (Vibrio fischeri).